A 425-amino-acid chain; its full sequence is Xyloglucan O-acetyltransferase 2 (425 aa).

The Cytoplasmic segment spans residues 1-18 (MGSPFKDHHTLHPSLVRK). A helical; Signal-anchor for type II membrane protein membrane pass occupies residues 19–38 (LIPWTFYAMVPLVLFRVYLY). The Lumenal segment spans residues 39–425 (PYPLHHTTTT…KWEYASRREQ (387 aa)). Cystine bridges form between Cys-68-Cys-118, Cys-89-Cys-154, Cys-98-Cys-398, and Cys-313-Cys-394. A glycan (N-linked (GlcNAc...) asparagine) is linked at Asn-85. A GDS motif motif is present at residues 141-143 (GDS). Ser-143 serves as the catalytic Nucleophile. 2 N-linked (GlcNAc...) asparagine glycosylation sites follow: Asn-183 and Asn-259. The active-site Proton donor is Asp-393. Residues 393-396 (DCVH) carry the DXXH motif motif. His-396 acts as the Proton acceptor in catalysis.

It belongs to the PC-esterase family. TBL subfamily.

It localises to the golgi apparatus membrane. In terms of biological role, xyloglucan acetyltransferase that catalyzes the acetylation of fucosylated Gal residues on xyloglucan side chains. Predominantly catalyze 6-O-monoacetylation of Gal residues in the Fuc-Gal-Xyl trisaccharide side chains of xyloglucan oligomers. The polypeptide is Xyloglucan O-acetyltransferase 2 (Populus trichocarpa (Western balsam poplar)).